The chain runs to 104 residues: Small ribosomal subunit protein uS10 (104 aa).

Belongs to the universal ribosomal protein uS10 family. Part of the 30S ribosomal subunit.

Its function is as follows. Involved in the binding of tRNA to the ribosomes. The chain is Small ribosomal subunit protein uS10 from Variovorax paradoxus (strain S110).